A 200-amino-acid polypeptide reads, in one-letter code: NADH-quinone oxidoreductase subunit C (200 aa).

Belongs to the complex I 30 kDa subunit family. In terms of assembly, NDH-1 is composed of 14 different subunits. Subunits NuoB, C, D, E, F, and G constitute the peripheral sector of the complex.

It is found in the cell inner membrane. The enzyme catalyses a quinone + NADH + 5 H(+)(in) = a quinol + NAD(+) + 4 H(+)(out). Functionally, NDH-1 shuttles electrons from NADH, via FMN and iron-sulfur (Fe-S) centers, to quinones in the respiratory chain. The immediate electron acceptor for the enzyme in this species is believed to be ubiquinone. Couples the redox reaction to proton translocation (for every two electrons transferred, four hydrogen ions are translocated across the cytoplasmic membrane), and thus conserves the redox energy in a proton gradient. The sequence is that of NADH-quinone oxidoreductase subunit C from Burkholderia mallei (strain NCTC 10247).